Reading from the N-terminus, the 353-residue chain is Guanine nucleotide-binding protein subunit alpha (353 aa).

A disordered region spans residues 1–25 (MGCGMSTEDKEGKARNEEIENQLKR). Glycine 2 carries the N-myristoyl glycine lipid modification. The S-palmitoyl cysteine moiety is linked to residue cysteine 3. Over residues 7–25 (TEDKEGKARNEEIENQLKR) the composition is skewed to basic and acidic residues. Positions 32–353 (NEIKMLLLGA…QENLRLCGLI (322 aa)) constitute a G-alpha domain. Residues 35 to 48 (KMLLLGAGESGKST) form a G1 motif region. Residues glutamate 43, serine 44, glycine 45, lysine 46, serine 47, threonine 48, aspartate 150, leucine 175, threonine 181, glycine 203, asparagine 269, lysine 270, aspartate 272, and alanine 325 each contribute to the GTP site. Residue serine 47 coordinates Mg(2+). Residues 173-181 (DVLRSRVKT) form a G2 motif region. Residue threonine 181 coordinates Mg(2+). The segment at 196-205 (YRMFDVGGQR) is G3 motif. The interval 265-272 (ILFLNKID) is G4 motif. The interval 323-328 (TCATDT) is G5 motif.

It belongs to the G-alpha family. G(q) subfamily. In terms of assembly, g proteins are composed of 3 units; alpha, beta and gamma. The alpha chain contains the guanine nucleotide binding site. Mg(2+) is required as a cofactor.

Its function is as follows. Guanine nucleotide-binding proteins (G proteins) are involved as modulators or transducers in various transmembrane signaling systems. The polypeptide is Guanine nucleotide-binding protein subunit alpha (fadA) (Emericella nidulans (strain FGSC A4 / ATCC 38163 / CBS 112.46 / NRRL 194 / M139) (Aspergillus nidulans)).